We begin with the raw amino-acid sequence, 257 residues long: Flagellar brake protein YcgR 1 (257 aa).

Residues 1–18 show a composition bias toward polar residues; that stretch reads MDTTQSNGQTDTQGQLHA. A disordered region spans residues 1–30; it reads MDTTQSNGQTDTQGQLHAQTAEGGNDFGRR. In terms of domain architecture, PilZ spans 133-246; sequence QRREYFRVDA…AENTLQRLIT (114 aa).

The protein belongs to the YcgR family. Monomer. Interacts with the flagellar basal bodies.

Its subcellular location is the bacterial flagellum basal body. Functionally, acts as a flagellar brake, regulating swimming and swarming in a bis-(3'-5') cyclic diguanylic acid (c-di-GMP)-dependent manner. Binds 1 c-di-GMP dimer per subunit. Increasing levels of c-di-GMP lead to decreased motility. In Paraburkholderia phytofirmans (strain DSM 17436 / LMG 22146 / PsJN) (Burkholderia phytofirmans), this protein is Flagellar brake protein YcgR 1.